We begin with the raw amino-acid sequence, 206 residues long: Small ribosomal subunit protein uS4 (206 aa).

An S4 RNA-binding domain is found at 96–156 (GRLDNVVYRM…EKSKKQARIK (61 aa)).

Belongs to the universal ribosomal protein uS4 family. In terms of assembly, part of the 30S ribosomal subunit. Contacts protein S5. The interaction surface between S4 and S5 is involved in control of translational fidelity.

One of the primary rRNA binding proteins, it binds directly to 16S rRNA where it nucleates assembly of the body of the 30S subunit. Its function is as follows. With S5 and S12 plays an important role in translational accuracy. This is Small ribosomal subunit protein uS4 from Pasteurella multocida (strain Pm70).